Consider the following 202-residue polypeptide: Large ribosomal subunit protein bL25 (202 aa).

This sequence belongs to the bacterial ribosomal protein bL25 family. CTC subfamily. As to quaternary structure, part of the 50S ribosomal subunit; part of the 5S rRNA/L5/L18/L25 subcomplex. Contacts the 5S rRNA. Binds to the 5S rRNA independently of L5 and L18.

This is one of the proteins that binds to the 5S RNA in the ribosome where it forms part of the central protuberance. The polypeptide is Large ribosomal subunit protein bL25 (Burkholderia ambifaria (strain MC40-6)).